The sequence spans 118 residues: Ferredoxin-thioredoxin reductase, catalytic chain (118 aa).

Position 56 (Cys56) interacts with [4Fe-4S] cluster. The active-site Nucleophile is the Cys58. Cys58 and Cys88 are oxidised to a cystine. 3 residues coordinate [4Fe-4S] cluster: Cys75, Cys77, and Cys86.

The protein belongs to the ferredoxin thioredoxin reductase beta subunit family. Heterodimer of subunit A (variable subunit) and subunit B (catalytic subunit). Heterodimeric FTR forms a complex with ferredoxin and thioredoxin. Requires [4Fe-4S] cluster as cofactor.

It catalyses the reaction [thioredoxin]-disulfide + 2 reduced [2Fe-2S]-[ferredoxin] + 2 H(+) = [thioredoxin]-dithiol + 2 oxidized [2Fe-2S]-[ferredoxin]. Catalytic subunit of the ferredoxin-thioredoxin reductase (FTR), which catalyzes the two-electron reduction of thioredoxins by the electrons provided by reduced ferredoxin. This Synechocystis sp. (strain ATCC 27184 / PCC 6803 / Kazusa) protein is Ferredoxin-thioredoxin reductase, catalytic chain.